We begin with the raw amino-acid sequence, 467 residues long: SVGFKAGVKEYKLTYYTPXXXAKDTDILAAFXVTPQPGVPPEEAGXXVAAESSTGTWTTVWTDGLTSLDRXKGXCYHIEPVIGEKDQYICYVAYPLDLFEEGSVTNMFTSIVGNVFGFKALRALRLEDLRIPVAYVKTFQGPPHGIQVERDKLNKYGRPLLGCTIKPKLGLSAKNYGRAVYECLRGGLDFTKDDENVNSQPFMRWRDRFLFCAEALYKAQAETGEIKGHYLNATAGTCEEMIKRAVFARELGVPIVMHDYLTGGFTANTSLAHYCRDNGLLLHIHRAMHAVIDRQKNHGMHFRVLRKALRLSGGDHIHSGTVVGKLEGEREITLGFVDLLRDDFIEKDRSRGIYFTQDWVSLPGVIPVASGGIHVWHMPALTEIFGDDSVLQFGGGTLGHPWGNAPGAVANRVALEACVQARNEGRDLAREGNAIIREASKWSPELAAACEVWKEIKFEFAAMDTLD.

At Lys5 the chain carries N6,N6,N6-trimethyllysine. Residues Asn114 and Thr164 each contribute to the substrate site. Lys166 functions as the Proton acceptor in the catalytic mechanism. Lys168 contacts substrate. Positions 192, 194, and 195 each coordinate Mg(2+). Lys192 carries the post-translational modification N6-carboxylysine. Residue His285 is the Proton acceptor of the active site. Positions 286, 318, and 370 each coordinate substrate.

Belongs to the RuBisCO large chain family. Type I subfamily. In terms of assembly, heterohexadecamer of 8 large chains and 8 small chains; disulfide-linked. The disulfide link is formed within the large subunit homodimers. Requires Mg(2+) as cofactor. The disulfide bond which can form in the large chain dimeric partners within the hexadecamer appears to be associated with oxidative stress and protein turnover.

The protein localises to the plastid. It localises to the chloroplast. The enzyme catalyses 2 (2R)-3-phosphoglycerate + 2 H(+) = D-ribulose 1,5-bisphosphate + CO2 + H2O. The catalysed reaction is D-ribulose 1,5-bisphosphate + O2 = 2-phosphoglycolate + (2R)-3-phosphoglycerate + 2 H(+). Its function is as follows. RuBisCO catalyzes two reactions: the carboxylation of D-ribulose 1,5-bisphosphate, the primary event in carbon dioxide fixation, as well as the oxidative fragmentation of the pentose substrate in the photorespiration process. Both reactions occur simultaneously and in competition at the same active site. The sequence is that of Ribulose bisphosphate carboxylase large chain from Scutellaria bolanderi (Sierra skullcap).